Here is a 495-residue protein sequence, read N- to C-terminus: GTPase Der (495 aa).

2 consecutive EngA-type G domains span residues 3-166 (PVVA…VQDE) and 208-381 (IKLA…ACAT). GTP is bound by residues 9-16 (GRPNVGKS), 56-60 (DTGGI), 118-121 (NKTD), 214-221 (GRPNVGKS), 261-265 (DTAGV), and 326-329 (NKWD). Positions 382 to 466 (RRVSTAMLTR…PIRIQFKEGE (85 aa)) constitute a KH-like domain.

This sequence belongs to the TRAFAC class TrmE-Era-EngA-EngB-Septin-like GTPase superfamily. EngA (Der) GTPase family. As to quaternary structure, associates with the 50S ribosomal subunit.

Functionally, GTPase that plays an essential role in the late steps of ribosome biogenesis. The polypeptide is GTPase Der (Pectobacterium carotovorum subsp. carotovorum (strain PC1)).